The following is a 194-amino-acid chain: uncharacterized protein (194 aa).

The protein to A.aeolicus AQ_423.

This is an uncharacterized protein from Aquifex aeolicus (strain VF5).